The primary structure comprises 294 residues: Putative deoxyribonuclease TATDN3 (294 aa).

Zn(2+)-binding residues include His-9, His-11, Glu-104, His-144, His-167, and Asp-215.

The protein belongs to the metallo-dependent hydrolases superfamily. TatD-type hydrolase family. It depends on Mn(2+) as a cofactor. Requires Ca(2+) as cofactor. Mg(2+) serves as cofactor. The cofactor is Zn(2+).

The protein resides in the nucleus. Its activity is regulated as follows. The 3'-exonuclease activity is sensitive to the metal ion present in the active site, whereas the AP endodeoxyribonuclease activity is observed in a variety of divalent metal cofactors. 3'-exoxonuclease activity is suppressed in the presence of Ca(2+), Zn(2+) and Ni(2+). In terms of biological role, exhibits 3'-exonuclease activities and apurinic/apyrimidinic (AP) endonuclease (in vitro). Show preferential AP endonuclease activity on double-stranded DNA substrates and 3'- exonuclease activity on single-stranded DNA. The sequence is that of Putative deoxyribonuclease TATDN3 (Tatdn3) from Mus musculus (Mouse).